The chain runs to 240 residues: Zein-alpha A20 (240 aa).

The first 21 residues, 1–21 (MATKIFSLLMLLALSACVANA), serve as a signal peptide directing secretion.

Belongs to the zein family.

Zeins are major seed storage proteins. This chain is Zein-alpha A20, found in Zea mays (Maize).